We begin with the raw amino-acid sequence, 238 residues long: Purine nucleoside phosphorylase DeoD-type (238 aa).

Histidine 4 contacts a purine D-ribonucleoside. Phosphate contacts are provided by residues glycine 20, arginine 24, arginine 43, and 87–90 (RVGS). A purine D-ribonucleoside is bound by residues 179–181 (EME) and 203–204 (SD). Aspartate 204 functions as the Proton donor in the catalytic mechanism.

Belongs to the PNP/UDP phosphorylase family. Homohexamer; trimer of homodimers.

The catalysed reaction is a purine D-ribonucleoside + phosphate = a purine nucleobase + alpha-D-ribose 1-phosphate. It catalyses the reaction a purine 2'-deoxy-D-ribonucleoside + phosphate = a purine nucleobase + 2-deoxy-alpha-D-ribose 1-phosphate. Functionally, catalyzes the reversible phosphorolytic breakdown of the N-glycosidic bond in the beta-(deoxy)ribonucleoside molecules, with the formation of the corresponding free purine bases and pentose-1-phosphate. This Pasteurella multocida (strain Pm70) protein is Purine nucleoside phosphorylase DeoD-type.